The chain runs to 259 residues: Proteasome assembly chaperone 2 (259 aa).

This sequence belongs to the PSMG2 family. Forms a heterodimer with psmg1. Degraded by the proteasome upon completion of 20S proteasome maturation.

The protein localises to the nucleus. Chaperone protein which promotes assembly of the 20S proteasome as part of a heterodimer with psmg1. The protein is Proteasome assembly chaperone 2 of Xenopus laevis (African clawed frog).